A 252-amino-acid chain; its full sequence is Glucosamine-6-phosphate deaminase (252 aa).

Residue Asp-67 is the Proton acceptor; for enolization step of the active site. Residue Asn-137 is the For ring-opening step of the active site. Residue His-139 is the Proton acceptor; for ring-opening step of the active site. The active-site For ring-opening step is Glu-144.

The protein belongs to the glucosamine/galactosamine-6-phosphate isomerase family. NagB subfamily.

It catalyses the reaction alpha-D-glucosamine 6-phosphate + H2O = beta-D-fructose 6-phosphate + NH4(+). Its pathway is amino-sugar metabolism; N-acetylneuraminate degradation; D-fructose 6-phosphate from N-acetylneuraminate: step 5/5. In terms of biological role, catalyzes the reversible isomerization-deamination of glucosamine 6-phosphate (GlcN6P) to form fructose 6-phosphate (Fru6P) and ammonium ion. This Staphylococcus aureus (strain bovine RF122 / ET3-1) protein is Glucosamine-6-phosphate deaminase.